Reading from the N-terminus, the 384-residue chain is Formate-dependent phosphoribosylglycinamide formyltransferase (384 aa).

N(1)-(5-phospho-beta-D-ribosyl)glycinamide is bound by residues 14–15 (EL) and E74. ATP-binding positions include R106, K147, 152 to 157 (SSGKGQ), 187 to 190 (EEFI), and E195. The 190-residue stretch at 111-300 (RLAAETLGLA…EFALHVRAIL (190 aa)) folds into the ATP-grasp domain. Mg(2+) contacts are provided by E259 and E271. Residues D278, K348, and 355-356 (RR) contribute to the N(1)-(5-phospho-beta-D-ribosyl)glycinamide site.

This sequence belongs to the PurK/PurT family. In terms of assembly, homodimer.

The catalysed reaction is N(1)-(5-phospho-beta-D-ribosyl)glycinamide + formate + ATP = N(2)-formyl-N(1)-(5-phospho-beta-D-ribosyl)glycinamide + ADP + phosphate + H(+). The protein operates within purine metabolism; IMP biosynthesis via de novo pathway; N(2)-formyl-N(1)-(5-phospho-D-ribosyl)glycinamide from N(1)-(5-phospho-D-ribosyl)glycinamide (formate route): step 1/1. Catalyzes two reactions: the first one is the production of beta-formyl glycinamide ribonucleotide (GAR) from formate, ATP and beta GAR; the second, a side reaction, is the production of acetyl phosphate and ADP from acetate and ATP. Its function is as follows. Involved in the de novo purine biosynthesis. Catalyzes the transfer of formate to 5-phospho-ribosyl-glycinamide (GAR), producing 5-phospho-ribosyl-N-formylglycinamide (FGAR). Formate is provided by PurU via hydrolysis of 10-formyl-tetrahydrofolate. The protein is Formate-dependent phosphoribosylglycinamide formyltransferase of Bacillus subtilis (strain 168).